We begin with the raw amino-acid sequence, 549 residues long: Oxygen-dependent choline dehydrogenase (549 aa).

An FAD-binding site is contributed by 4–33 (DFVIIGSGSAGSAMAYRLSEDGRYSVIVIE). Residue H465 is the Proton acceptor of the active site.

It belongs to the GMC oxidoreductase family. FAD serves as cofactor.

The enzyme catalyses choline + A = betaine aldehyde + AH2. It carries out the reaction betaine aldehyde + NAD(+) + H2O = glycine betaine + NADH + 2 H(+). Its pathway is amine and polyamine biosynthesis; betaine biosynthesis via choline pathway; betaine aldehyde from choline (cytochrome c reductase route): step 1/1. Involved in the biosynthesis of the osmoprotectant glycine betaine. Catalyzes the oxidation of choline to betaine aldehyde and betaine aldehyde to glycine betaine at the same rate. This Brucella ovis (strain ATCC 25840 / 63/290 / NCTC 10512) protein is Oxygen-dependent choline dehydrogenase.